A 433-amino-acid polypeptide reads, in one-letter code: tRNA-2-methylthio-N(6)-dimethylallyladenosine synthase (433 aa).

One can recognise an MTTase N-terminal domain in the interval lysine 3–alanine 118. Cysteine 12, cysteine 49, cysteine 81, cysteine 150, cysteine 154, and cysteine 157 together coordinate [4Fe-4S] cluster. The Radical SAM core domain maps to serine 136 to glutamate 369. The 62-residue stretch at glutamine 372–leucine 433 folds into the TRAM domain.

This sequence belongs to the methylthiotransferase family. MiaB subfamily. In terms of assembly, monomer. [4Fe-4S] cluster serves as cofactor.

The protein localises to the cytoplasm. It catalyses the reaction N(6)-dimethylallyladenosine(37) in tRNA + (sulfur carrier)-SH + AH2 + 2 S-adenosyl-L-methionine = 2-methylsulfanyl-N(6)-dimethylallyladenosine(37) in tRNA + (sulfur carrier)-H + 5'-deoxyadenosine + L-methionine + A + S-adenosyl-L-homocysteine + 2 H(+). Functionally, catalyzes the methylthiolation of N6-(dimethylallyl)adenosine (i(6)A), leading to the formation of 2-methylthio-N6-(dimethylallyl)adenosine (ms(2)i(6)A) at position 37 in tRNAs that read codons beginning with uridine. This Wolinella succinogenes (strain ATCC 29543 / DSM 1740 / CCUG 13145 / JCM 31913 / LMG 7466 / NCTC 11488 / FDC 602W) (Vibrio succinogenes) protein is tRNA-2-methylthio-N(6)-dimethylallyladenosine synthase.